The primary structure comprises 262 residues: Type II restriction enzyme MspI (262 aa).

The catalysed reaction is Endonucleolytic cleavage of DNA to give specific double-stranded fragments with terminal 5'-phosphates.. Functionally, a P subtype restriction enzyme that recognizes the double-stranded sequence 5'-CCGG-3' and cleaves after C-1. In Moraxella sp, this protein is Type II restriction enzyme MspI (mspIR).